We begin with the raw amino-acid sequence, 146 residues long: D-aminoacyl-tRNA deacylase (146 aa).

The short motif at Gly137–Pro138 is the Gly-cisPro motif, important for rejection of L-amino acids element.

Belongs to the DTD family. Homodimer.

The protein localises to the cytoplasm. It catalyses the reaction glycyl-tRNA(Ala) + H2O = tRNA(Ala) + glycine + H(+). It carries out the reaction a D-aminoacyl-tRNA + H2O = a tRNA + a D-alpha-amino acid + H(+). An aminoacyl-tRNA editing enzyme that deacylates mischarged D-aminoacyl-tRNAs. Also deacylates mischarged glycyl-tRNA(Ala), protecting cells against glycine mischarging by AlaRS. Acts via tRNA-based rather than protein-based catalysis; rejects L-amino acids rather than detecting D-amino acids in the active site. By recycling D-aminoacyl-tRNA to D-amino acids and free tRNA molecules, this enzyme counteracts the toxicity associated with the formation of D-aminoacyl-tRNA entities in vivo and helps enforce protein L-homochirality. The protein is D-aminoacyl-tRNA deacylase of Bacillus thuringiensis subsp. konkukian (strain 97-27).